The following is a 271-amino-acid chain: Phosphatidylinositol transfer protein beta isoform (271 aa).

At Lys215 the chain carries N6-acetyllysine. Position 262 is a phosphoserine; by PKC (Ser262).

This sequence belongs to the PtdIns transfer protein family. PI transfer class I subfamily. Post-translationally, constitutive phosphorylation of Ser-262 has no effect on phospholipid transfer activity but is required for Golgi targeting.

The protein resides in the golgi apparatus. The protein localises to the golgi apparatus membrane. It localises to the endoplasmic reticulum membrane. It catalyses the reaction a 1,2-diacyl-sn-glycero-3-phosphocholine(in) = a 1,2-diacyl-sn-glycero-3-phosphocholine(out). It carries out the reaction a 1,2-diacyl-sn-glycero-3-phospho-(1D-myo-inositol)(in) = a 1,2-diacyl-sn-glycero-3-phospho-(1D-myo-inositol)(out). The enzyme catalyses an N-(acyl)-sphingosylphosphocholine(in) = an N-(acyl)-sphingosylphosphocholine(out). Its function is as follows. Catalyzes the transfer of phosphatidylinositol, phosphatidylcholine and sphingomyelin between membranes. Required for COPI-mediated retrograde transport from the Golgi to the endoplasmic reticulum; phosphatidylinositol and phosphatidylcholine transfer activity is essential for this function. This is Phosphatidylinositol transfer protein beta isoform (Pitpnb) from Mus musculus (Mouse).